Reading from the N-terminus, the 103-residue chain is Large ribosomal subunit protein eL14 (103 aa).

It belongs to the eukaryotic ribosomal protein eL14 family.

In Pyrobaculum neutrophilum (strain DSM 2338 / JCM 9278 / NBRC 100436 / V24Sta) (Thermoproteus neutrophilus), this protein is Large ribosomal subunit protein eL14.